A 613-amino-acid polypeptide reads, in one-letter code: Chaperone protein DnaK (613 aa).

Thr173 carries the post-translational modification Phosphothreonine; by autocatalysis. The segment at Ala577–Lys613 is disordered. The segment covering Asn597–Lys613 has biased composition (acidic residues).

Belongs to the heat shock protein 70 family.

Functionally, acts as a chaperone. The polypeptide is Chaperone protein DnaK (Bacillus pumilus (strain SAFR-032)).